The chain runs to 185 residues: MKTAQELRVGNVVQIGSEAWVIAKAEYNKSGRNSAVVKMKMKNLLSNAGQESVYKADDKFEVVVLDRKEVTYSYFADPMYVFMDADYNQYEVEAEMMGEALNYLEDGMACEVVFYNEKAISVELPTVLVREITYTEPAVKGDTSSGKVLKNAKLATGFELQVPLFCNTGDKIEIDTRTNEYRSRA.

This sequence belongs to the elongation factor P family.

It localises to the cytoplasm. It functions in the pathway protein biosynthesis; polypeptide chain elongation. In terms of biological role, involved in peptide bond synthesis. Stimulates efficient translation and peptide-bond synthesis on native or reconstituted 70S ribosomes in vitro. Probably functions indirectly by altering the affinity of the ribosome for aminoacyl-tRNA, thus increasing their reactivity as acceptors for peptidyl transferase. The sequence is that of Elongation factor P from Burkholderia cenocepacia (strain HI2424).